Consider the following 481-residue polypeptide: RAC-beta serine/threonine-protein kinase (481 aa).

Residue methionine 1 is modified to N-acetylmethionine. Residues 5–108 (SVIKEGWLHK…WMRAIQMVAN (104 aa)) enclose the PH domain. Serine 34 bears the Phosphoserine mark. Cysteine 60 and cysteine 77 are joined by a disulfide. Phosphoserine is present on serine 126. O-linked (GlcNAc) serine glycosylation is found at serine 128 and serine 131. The region spanning 152 to 409 (FDYLKLLGKG…AKEVMEHRFF (258 aa)) is the Protein kinase domain. ATP is bound by residues 158-166 (LGKGTFGKV) and lysine 181. Aspartate 275 functions as the Proton acceptor in the catalytic mechanism. Residues asparagine 280 and aspartate 293 each coordinate Mn(2+). A disulfide bridge connects residues cysteine 297 and cysteine 311. A glycan (O-linked (GlcNAc) threonine) is linked at threonine 306. A Phosphothreonine; by PDPK1 modification is found at threonine 309. O-linked (GlcNAc) threonine glycosylation is present at threonine 313. An AGC-kinase C-terminal domain is found at 410–481 (LSINWQDVVQ…QFSYSASIRE (72 aa)). Serine 447 carries the phosphoserine modification. Phosphothreonine is present on threonine 451. Serine 474 and serine 478 each carry phosphoserine. An O-linked (GlcNAc) serine; alternate glycan is attached at serine 474.

It belongs to the protein kinase superfamily. AGC Ser/Thr protein kinase family. RAC subfamily. In terms of assembly, interacts with BTBD10. Interacts with KCTD20. Interacts (via PH domain) with MTCP1, TCL1A and TCL1B; this interaction may facilitate AKT2 oligomerization and phosphorylation, hence increasing kinase activity. Interacts with PHB2; this interaction may be important for myogenic differentiation. Interacts (when phosphorylated) with CLIP3/ClipR-59; this interaction promotes AKT2 recruitment to the plasma membrane. Interacts with WDFY2/ProF (via WD repeats 1-3). Post-translationally, phosphorylation on Thr-309 and Ser-474 is required for full activity. Phosphorylation of the activation loop at Thr-309 by PDPK1/PDK1 is a prerequisite for full activation. Phosphorylated and activated by PDPK1/PDK1 in the presence of phosphatidylinositol 3,4,5-trisphosphate. Phosphorylation by mTORC2 in response to growth factors plays a key role in AKT1 activation: mTORC2 phosphorylates different sites depending on the context, such as Ser-474 or Ser-478, thereby facilitating subsequent phosphorylation of the activation loop by PDPK1/PDK1. Ubiquitinated; undergoes both 'Lys-48'- and 'Lys-63'-linked polyubiquitination. TRAF6 catalyzes 'Lys-63'-linked AKT2 ubiquitination; this modification may be important for AKT2 recruitment to the plasma membrane and for AKT2 activating phosphorylation. When phosphorylated, undergoes 'Lys-48'-polyubiquitination catalyzed by TTC3 in the nucleus, leading to its degradation by the proteasome. In terms of processing, O-GlcNAcylation at Thr-306 and Thr-313 inhibits activating phosphorylation at Thr-309 via the disruption of the interaction between AKT and PDPK1/PDK1. Widely expressed. Expressed in myoblasts.

The protein resides in the cytoplasm. The protein localises to the nucleus. It localises to the cell membrane. Its subcellular location is the early endosome. It carries out the reaction L-seryl-[protein] + ATP = O-phospho-L-seryl-[protein] + ADP + H(+). The enzyme catalyses L-threonyl-[protein] + ATP = O-phospho-L-threonyl-[protein] + ADP + H(+). Its activity is regulated as follows. Phosphorylation at Thr-309 (in the kinase domain) and Ser-474 (in the C-terminal regulatory region) is required for full activation. In adipocytes and hepatocytes, the activation is induced by insulin. Aminofurazans, such as 4-[2-(4-amino-2,5-dihydro-1,2,5-oxadiazol-3-yl)-6-{[(1S)-3-amino-1-phenylpropyl]oxy}-1-ethyl-1H-imidazo[4,5-c]pyridin-4-yl]-2-methylbut-3-yn-2-ol (compound 32), are potent AKT2 inhibitors. AKT2 phosphorylation of PKP1 is induced by insulin. Functionally, serine/threonine kinase closely related to AKT1 and AKT3. All 3 enzymes, AKT1, AKT2 and AKT3, are collectively known as AKT kinase. AKT regulates many processes including metabolism, proliferation, cell survival, growth and angiogenesis, through the phosphorylation of a range of downstream substrates. Over 100 substrates have been reported so far, although for most of them, the precise AKT kinase catalyzing the reaction was not specified. AKT regulates glucose uptake by mediating insulin-induced translocation of the SLC2A4/GLUT4 glucose transporter to the cell surface. Phosphorylation of PTPN1 at 'Ser-50' negatively modulates its phosphatase activity preventing dephosphorylation of the insulin receptor and the attenuation of insulin signaling. Phosphorylation of TBC1D4 triggers the binding of this effector to inhibitory 14-3-3 proteins, which is required for insulin-stimulated glucose transport. AKT also regulates the storage of glucose in the form of glycogen by phosphorylating GSK3A at 'Ser-21' and GSK3B at 'Ser-9', resulting in inhibition of its kinase activity. Phosphorylation of GSK3 isoforms by AKT is also thought to be one mechanism by which cell proliferation is driven. AKT also regulates cell survival via the phosphorylation of MAP3K5 (apoptosis signal-related kinase). Phosphorylation of 'Ser-83' decreases MAP3K5 kinase activity stimulated by oxidative stress and thereby prevents apoptosis. AKT mediates insulin-stimulated protein synthesis by phosphorylating TSC2 at 'Ser-939' and 'Thr-1462', thereby activating mTORC1 signaling and leading to both phosphorylation of 4E-BP1 and in activation of RPS6KB1. AKT is involved in the phosphorylation of members of the FOXO factors (Forkhead family of transcription factors), leading to binding of 14-3-3 proteins and cytoplasmic localization. In particular, FOXO1 is phosphorylated at 'Thr-24', 'Ser-256' and 'Ser-319'. FOXO3 and FOXO4 are phosphorylated on equivalent sites. AKT has an important role in the regulation of NF-kappa-B-dependent gene transcription and positively regulates the activity of CREB1 (cyclic AMP (cAMP)-response element binding protein). The phosphorylation of CREB1 induces the binding of accessory proteins that are necessary for the transcription of pro-survival genes such as BCL2 and MCL1. AKT phosphorylates 'Ser-454' on ATP citrate lyase (ACLY), thereby potentially regulating ACLY activity and fatty acid synthesis. Activates the 3B isoform of cyclic nucleotide phosphodiesterase (PDE3B) via phosphorylation of 'Ser-273', resulting in reduced cyclic AMP levels and inhibition of lipolysis. Phosphorylates PIKFYVE on 'Ser-318', which results in increased PI(3)P-5 activity. The Rho GTPase-activating protein DLC1 is another substrate and its phosphorylation is implicated in the regulation cell proliferation and cell growth. AKT plays a role as key modulator of the AKT-mTOR signaling pathway controlling the tempo of the process of newborn neurons integration during adult neurogenesis, including correct neuron positioning, dendritic development and synapse formation. Signals downstream of phosphatidylinositol 3-kinase (PI(3)K) to mediate the effects of various growth factors such as platelet-derived growth factor (PDGF), epidermal growth factor (EGF), insulin and insulin-like growth factor 1 (IGF1). AKT mediates the antiapoptotic effects of IGF1. Essential for the SPATA13-mediated regulation of cell migration and adhesion assembly and disassembly. May be involved in the regulation of the placental development. In response to lysophosphatidic acid stimulation, inhibits the ciliogenesis cascade. In this context, phosphorylates WDR44, hence stabilizing its interaction with Rab11 and preventing the formation of the ciliogenic Rab11-FIP3-RAB3IP complex. Also phosphorylates RAB3IP/Rabin8, thus may affect RAB3IP guanine nucleotide exchange factor (GEF) activity toward Rab8, which is important for cilia growth. Phosphorylates PKP1, facilitating its interaction with YWHAG and translocation to the nucleus, ultimately resulting in a reduction in keratinocyte intercellular adhesion. Phosphorylation of PKP1 increases PKP1 protein stability, translocation to the cytoplasm away from desmosome plaques and PKP1-driven cap-dependent translation. In terms of biological role, several AKT2-specific substrates have been identified, including ANKRD2, C2CD5, CLK2 and PITX2. May play a role in myoblast differentiation. In this context, may act through PITX2 phosphorylation. Unphosphorylated PITX2 associates with an ELAVL1/HuR-containing complex, which stabilizes CCND1 cyclin mRNA, ensuring cell proliferation. Phosphorylation by AKT2 impairs this association, leading to CCND1 mRNA destabilization and progression towards differentiation. Also involved in the negative regulation of myogenesis in response to stress conditions. In this context, acts by phosphorylating ANKRD2. May also be a key regulator of glucose uptake. Regulates insulin-stimulated glucose transport by the increase of glucose transporter GLUT4 translocation from intracellular stores to the plasma membrane. In this context, acts by phosphorylating C2CD5/CDP138 on 'Ser-197' in insulin-stimulated adipocytes. Through the phosphorylation of CLK2 on 'Thr-343', involved in insulin-regulated suppression of hepatic gluconeogenesis. This chain is RAC-beta serine/threonine-protein kinase, found in Homo sapiens (Human).